A 995-amino-acid polypeptide reads, in one-letter code: Endo-beta-N-acetylglucosaminidase EndoS (995 aa).

Residues 1–36 (MDKHLLVKRTLGCVCAATLMGAALATHHDSLNTVKA) form the signal peptide. Residues 112–432 (SLYGGYFRTW…KDATDNIFHS (321 aa)) enclose the GH18 domain. A glycoprotein is bound by residues His-151, Trp-153, and Arg-186. Glu-235 (proton donor) is an active-site residue. The a glycoprotein site is built by Asp-237, Gln-303, Tyr-305, Glu-349, Glu-350, Asn-356, and Tyr-402. 4 LRR repeats span residues 437-460 (SKALKTVMLKDKSYDLIDEKDFPD), 478-503 (LERFNGTLRLDNPAIQSLEGLNKFKK), 562-585 (LTGLKELDLSGFDRETLAGLDAAT), and 586-609 (LTSLEKVDISGNKLDLAPGTENRQ). Residues 765-923 (MVNLAEGATV…VPELQILGYP (159 aa)) form a carbohydrate-binding module (CBM) region. Lys-786, Asp-789, Gln-791, Pro-915, and Glu-916 together coordinate Ca(2+). The three-helix bundle (3H) stretch occupies residues 924–995 (LPNADTIMKT…CIEKRQLLKK (72 aa)).

The protein belongs to the glycosyl hydrolase 18 family. Post-translationally, cleaved by SpeB protease; leading to loss of endoglucosidase activity. EndoS is produced and secreted prior to SpeB, suggesting that it is degraded after acting as a host immune evasion factor.

Its subcellular location is the secreted. It is found in the host extracellular space. It catalyses the reaction an N(4)-(oligosaccharide-(1-&gt;3)-[oligosaccharide-(1-&gt;6)]-beta-D-Man-(1-&gt;4)-beta-D-GlcNAc-(1-&gt;4)-alpha-D-GlcNAc)-L-asparaginyl-[protein] + H2O = an oligosaccharide-(1-&gt;3)-[oligosaccharide-(1-&gt;6)]-beta-D-Man-(1-&gt;4)-D-GlcNAc + N(4)-(N-acetyl-beta-D-glucosaminyl)-L-asparaginyl-[protein]. Endoglucosidase that acts as a host immune evasion factor by mediating hydrolysis of the N-linked glycan from the Fc region of host immunoglobulin-gamma (IgG) during infection. Specifically catalyzes the hydrolysis of the beta-1,4 linkage between the first two N-acetylglucosamine residues of the complex-type N-linked glycan located on 'Asn-297' of the Fc region of IgG antibodies (IGHG1, IGHG2, IGHG3 or IGHG4), thereby preventing interaction between IgGs and Fc receptors and ability to activate the complement pathway. Shows a specificity for biantennary complex type N-glycans; does neither cleave larger complex type glycans nor oligomannose and nor hybrid-type glycans. Specifically acts on IgGs; does not act on immunoglobulin alpha, beta, delta or mu. The protein is Endo-beta-N-acetylglucosaminidase EndoS of Streptococcus pyogenes serotype M1.